A 270-amino-acid chain; its full sequence is MSLTPRQLGEQLRQRKQRRQPIAVLTAWDALSASWAEAAGVDLVLVGDSLAMVALGHATTLPVTLEAMVQHTAAVERGLRHTPIVSDLPFLSYQCGPDQAVAAAGRFLKETGCAGVKLEGGEPETIAVIDRLVRSGIPVMGHLGLTPQSVHQLGYRRQATDPVAQERLWQRALELQQTGCFALVLEHVPAELATRLSAELSVPVIGIGAGEGCDGQVRVSADLLGLTPQQPPFSPALLDGRELFSQALRQWVQGVQSAPVPPANHSAPHC.

Asp-48 and Asp-87 together coordinate Mg(2+). 3-methyl-2-oxobutanoate is bound by residues 48–49, Asp-87, and Lys-117; that span reads DS. Glu-119 lines the Mg(2+) pocket. The active-site Proton acceptor is the Glu-186.

The protein belongs to the PanB family. In terms of assembly, homodecamer; pentamer of dimers. The cofactor is Mg(2+).

The protein resides in the cytoplasm. It carries out the reaction 3-methyl-2-oxobutanoate + (6R)-5,10-methylene-5,6,7,8-tetrahydrofolate + H2O = 2-dehydropantoate + (6S)-5,6,7,8-tetrahydrofolate. Its pathway is cofactor biosynthesis; (R)-pantothenate biosynthesis; (R)-pantoate from 3-methyl-2-oxobutanoate: step 1/2. Functionally, catalyzes the reversible reaction in which hydroxymethyl group from 5,10-methylenetetrahydrofolate is transferred onto alpha-ketoisovalerate to form ketopantoate. This is 3-methyl-2-oxobutanoate hydroxymethyltransferase from Synechococcus sp. (strain RCC307).